The primary structure comprises 608 residues: MKTFSVTKSSVVFAMALGMASTAFAQDFCSNAQHSGQKVTITSNQTGKIGDIGYELWDENGHGGSATFYSDGSMDCNITGAKDYLCRAGLSLGSNKTYKELGGDMIAEFKLVKSGAQNVGYSYIGIYGWMEGVSGTPSQLVEYYVIDNTLANDMPGSWIGNERKGTITVDGGTYTVYRNTRTGPAIKNSGNVTFYQYFSVRTSPRDCGTINISEHMRQWEKMGLTMGKLYEAKVLGEAGNVNGEVRGGHMDFPHAKVYVKNGSDPVSSSSVKSSSSTDAPKSSSSKGNGNVSGKIDACKDVMGHEGKETRTQGQNNSSVTGNVGSSPYHYEIWYQGGNNSMTFYDNGTYKASWNGTNDFLARVGFKYDEKHTYEELGPIDAYYKWSKQGSAGGYNYIGIYGWTVDPLVEYYIVDDWFNKPGANLLGQRKGEFTVDGDTYEIWQNTRVQQPSIKGTQTFPQYFSVRKSARSCGHIDITAHMKKWEELGMKMGKMYEAKVLVEAGGGSGSFDVTYFKMTDKAHPLAQPEPESSSSEAKVESSSSTVALHAAPKMELKSGNFQVFDMQGRFLGTVKLDAGASVAQVLKANFKNAGIYMVKQGNFMQRVAVK.

The first 25 residues, 1-25 (MKTFSVTKSSVVFAMALGMASTAFA), serve as a signal peptide directing secretion. A GH11 1 domain is found at 40 to 250 (TITSNQTGKI…VNGEVRGGHM (211 aa)). The active-site Nucleophile is E142. E237 functions as the Proton donor in the catalytic mechanism. The segment covering 263–294 (SDPVSSSSVKSSSSTDAPKSSSSKGNGNVSGK) has biased composition (low complexity). Residues 263 to 296 (SDPVSSSSVKSSSSTDAPKSSSSKGNGNVSGKID) are disordered. In terms of domain architecture, GH11 2 spans 316 to 514 (NSSVTGNVGS…GSGSFDVTYF (199 aa)). E409 functions as the Nucleophile in the catalytic mechanism. The active-site Proton donor is the E501. The tract at residues 520–539 (AHPLAQPEPESSSSEAKVES) is disordered. The segment covering 527–539 (EPESSSSEAKVES) has biased composition (low complexity).

The protein belongs to the glycosyl hydrolase 11 (cellulase G) family.

It carries out the reaction Endohydrolysis of (1-&gt;4)-beta-D-xylosidic linkages in xylans.. The protein operates within glycan degradation; xylan degradation. Functionally, cleaves xylans with the production of xylose, xylobiose and xylo-oligosaccharides. This Fibrobacter succinogenes (strain ATCC 19169 / S85) protein is Endo-1,4-beta-xylanase C (xynC).